The following is a 337-amino-acid chain: Anthranilate phosphoribosyltransferase (337 aa).

Residues Gly-81, 84–85, Thr-89, 91–94, 109–117, and Thr-121 contribute to the 5-phospho-alpha-D-ribose 1-diphosphate site; these read GD, NIST, and KHGNRALSS. Gly-81 contributes to the anthranilate binding site. Residue Ser-93 participates in Mg(2+) binding. Asn-112 provides a ligand contact to anthranilate. Arg-167 serves as a coordination point for anthranilate. Mg(2+)-binding residues include Asp-225 and Glu-226.

The protein belongs to the anthranilate phosphoribosyltransferase family. As to quaternary structure, homodimer. It depends on Mg(2+) as a cofactor.

It catalyses the reaction N-(5-phospho-beta-D-ribosyl)anthranilate + diphosphate = 5-phospho-alpha-D-ribose 1-diphosphate + anthranilate. It functions in the pathway amino-acid biosynthesis; L-tryptophan biosynthesis; L-tryptophan from chorismate: step 2/5. Functionally, catalyzes the transfer of the phosphoribosyl group of 5-phosphorylribose-1-pyrophosphate (PRPP) to anthranilate to yield N-(5'-phosphoribosyl)-anthranilate (PRA). The protein is Anthranilate phosphoribosyltransferase of Rhizobium meliloti (strain 1021) (Ensifer meliloti).